Reading from the N-terminus, the 1103-residue chain is Detocs histidine-protein kinase DtcA (1103 aa).

The residue at position 758 (His-758) is a Phosphohistidine; by autocatalysis. One copy of the TPR repeat lies at 818–851 (TIINDAKEKVHINTGEFIESAKVFNYAIEIEFVE).

Post-translationally, autophosphorylated.

It carries out the reaction ATP + protein L-histidine = ADP + protein N-phospho-L-histidine.. In terms of biological role, sensor-kinase member of the two-component regulatory system Detocs that confers resistance to bacteriophage. When the system (DtcA-DtcB-DtcC) is expressed in a susceptible E.coli (strain MG1655) it confers resistance to bacteriophages T2, T4, T5, T7, SECphi4, SECphi6 and SECphi27; the level of resistance varies, resistance to T2, T7 and SECphi4 is not very high. DtcA (this subunit) probably autophosphorylates upon sensing viral infection, and subsequently transfers the phosphate signal to DtcC which activates it, leading to an antiviral defense; DtcB may scavenge phosphorylation signals from accidental activation of DtcA. The sequence is that of Detocs histidine-protein kinase DtcA from Enterobacter cloacae (strain JD6301).